Consider the following 116-residue polypeptide: MGDVNFLEQMLLKSTMKEIEERYDDVITIYKYDYEIRGIAEKLYRLSKIVEEVFKEIPNPEKKLDESLYTTLYSVLKDINSILYDLSIATNEQISYVLMQAYRKLDNIDNLLSKLK.

This is an uncharacterized protein from Aquifex aeolicus (strain VF5).